Consider the following 122-residue polypeptide: Large ribosomal subunit protein uL14 (122 aa).

Belongs to the universal ribosomal protein uL14 family. Part of the 50S ribosomal subunit. Forms a cluster with proteins L3 and L19. In the 70S ribosome, L14 and L19 interact and together make contacts with the 16S rRNA in bridges B5 and B8.

Binds to 23S rRNA. Forms part of two intersubunit bridges in the 70S ribosome. This Aeromonas salmonicida (strain A449) protein is Large ribosomal subunit protein uL14.